A 339-amino-acid polypeptide reads, in one-letter code: GATA transcription factor 5 (339 aa).

Disordered stretches follow at residues 68–88, 126–145, 163–206, and 221–242; these read MVRV…RSSD, EYSG…WLTG, PVPA…PSSP, and ERPP…SGEL. Positions 126-136 are enriched in polar residues; it reads EYSGPNLTGTP. Residues 167-174 carry the Nuclear localization signal motif; sequence KARSKRNR. Residues 181–206 show a composition bias toward low complexity; the sequence is SLGSSSSSGPSSSGSTSSSSSGPSSP. The GATA-type zinc-finger motif lies at 245–299; that stretch reads LQPQRKCSHCGVQKTPQWRAGPMGAKTLCNACGVRYKSGRLLPEYRPACSPTFSS. The interval 314–339 is disordered; that stretch reads RKKEPTSDNETGLNQLVQSPQAVPSF. Residues 321–339 are compositionally biased toward polar residues; the sequence is DNETGLNQLVQSPQAVPSF.

Belongs to the type IV zinc-finger family. Class A subfamily.

The protein resides in the nucleus. Its function is as follows. Transcriptional activator that specifically binds 5'-GATA-3' or 5'-GAT-3' motifs within gene promoters. May be involved in the regulation of some light-responsive genes. The chain is GATA transcription factor 5 (GATA5) from Arabidopsis thaliana (Mouse-ear cress).